Consider the following 96-residue polypeptide: Protein Vpr (96 aa).

A homooligomerization region spans residues 1-42; sequence MEQAPEDQGPQREPYNEWTLELLEELKSEAVRHFPRIWLHNL. Residues Ser-79, Ser-94, and Ser-96 each carry the phosphoserine; by host modification.

This sequence belongs to the HIV-1 VPR protein family. Homooligomer, may form homodimer. Interacts with p6-gag region of the Pr55 Gag precursor protein through a (Leu-X-X)4 motif near the C-terminus of the P6gag protein. Interacts with host UNG. May interact with host RAD23A/HHR23A. Interacts with host VPRBP/DCAF1, leading to hijack the CUL4A-RBX1-DDB1-DCAF1/VPRBP complex, mediating ubiquitination of host proteins such as TERT and ZGPAT and arrest of the cell cycle in G2 phase. Phosphorylated on several residues by host. These phosphorylations regulate VPR activity for the nuclear import of the HIV-1 pre-integration complex.

It localises to the virion. Its subcellular location is the host nucleus. The protein localises to the host extracellular space. During virus replication, may deplete host UNG protein, and incude G2-M cell cycle arrest. Acts by targeting specific host proteins for degradation by the 26S proteasome, through association with the cellular CUL4A-DDB1 E3 ligase complex by direct interaction with host VPRPB/DCAF-1. Cell cycle arrest reportedly occurs within hours of infection and is not blocked by antiviral agents, suggesting that it is initiated by the VPR carried into the virion. Additionally, VPR induces apoptosis in a cell cycle dependent manner suggesting that these two effects are mechanistically linked. Detected in the serum and cerebrospinal fluid of AIDS patient, VPR may also induce cell death to bystander cells. Functionally, during virus entry, plays a role in the transport of the viral pre-integration (PIC) complex to the host nucleus. This function is crucial for viral infection of non-dividing macrophages. May act directly at the nuclear pore complex, by binding nucleoporins phenylalanine-glycine (FG)-repeat regions. This Homo sapiens (Human) protein is Protein Vpr.